Here is a 299-residue protein sequence, read N- to C-terminus: Protoheme IX farnesyltransferase 1 (299 aa).

Transmembrane regions (helical) follow at residues 25 to 45 (VVVLMLITSLVGMFLATRAGV), 47 to 67 (WTVLVFGNLGIALCAGGAAAV), 95 to 115 (TGALTFALVLALLGQALLLTF), 119 to 139 (LTAWLTLASLLGYAVIYTGFL), 147 to 167 (IVIGGLAGAAPPLLGWTAATG), 173 to 193 (PLLLVLIIFAWTPPHFWALAI), 226 to 246 (ALLAVSLLPYVIHMSGLLYLI), and 279 to 299 (IWYLFLLFIALLVDHYLLLNL).

Belongs to the UbiA prenyltransferase family. Protoheme IX farnesyltransferase subfamily.

It localises to the cell inner membrane. It carries out the reaction heme b + (2E,6E)-farnesyl diphosphate + H2O = Fe(II)-heme o + diphosphate. Its pathway is porphyrin-containing compound metabolism; heme O biosynthesis; heme O from protoheme: step 1/1. Functionally, converts heme B (protoheme IX) to heme O by substitution of the vinyl group on carbon 2 of heme B porphyrin ring with a hydroxyethyl farnesyl side group. In Pseudomonas fluorescens (strain Pf0-1), this protein is Protoheme IX farnesyltransferase 1.